The chain runs to 171 residues: MATTDSSTDSADEGPSPKSSYCDTTETKSSFLEPPLPATICGLANLLEIPLDDCLIPCNFCGNFLTHLEVCEFDQKKLSLIWKGHCVFACCRVCCTATATYEFNEFYESTVEGREIESVTGKSIFNVDVRCYTCMRFLDSIEKLDICGRKLPFHKVRGSWKGICRLCKHFQ.

The tract at residues 1 to 28 is disordered; that stretch reads MATTDSSTDSADEGPSPKSSYCDTTETK. A compositionally biased stretch (polar residues) spans 17–28; sequence PKSSYCDTTETK. 2 zinc fingers span residues 58–94 and 131–167; these read CNFC…CRVC and CYTC…CRLC.

Belongs to the papillomaviridae E6 protein family. Forms homodimers. Interacts with ubiquitin-protein ligase UBE3A/E6-AP; this interaction stimulates UBE3A ubiquitin activity. Interacts with host BAK1.

It localises to the host cytoplasm. Its subcellular location is the host nucleus. Plays a major role in the induction and maintenance of cellular transformation. E6 associates with host UBE3A/E6-AP ubiquitin-protein ligase and modulates its activity. Protects host keratinocytes from apoptosis by mediating the degradation of host BAK1. May also inhibit host immune response. The polypeptide is Protein E6 (Human papillomavirus 14).